Here is a 957-residue protein sequence, read N- to C-terminus: Melanoma-associated antigen E1 (957 aa).

The segment at 1 to 433 (MSLVSQNSRR…RNPSKCSIVL (433 aa)) is disordered. Composition is skewed to polar residues over residues 85–96 (SEASSASGQPTV) and 104–130 (LLAT…SVTL). Residues 138-156 (TSRPPTSSEEPSTSVPATP) are compositionally biased toward low complexity. 6 stretches are compositionally biased toward polar residues: residues 158-177 (EGTS…TSVV), 220-232 (LSTS…TEGL), 256-306 (RSTT…GPST), 328-344 (LSTS…STSV), 364-380 (RSTS…DTSV), and 414-428 (TLFS…NPSK). 2 MAGE domains span residues 491–690 (MEQN…YNEA) and 745–936 (LESK…YREA). Positions 743-957 (SRLESKARKL…HRQFFVHNFR (215 aa)) are interaction with DTNA.

In terms of assembly, interacts with DTNA. Interacts with TRIM28.

It is found in the cytoplasm. It localises to the perinuclear region. The protein localises to the nucleus. Its subcellular location is the cell membrane. Functionally, may enhance ubiquitin ligase activity of RING-type zinc finger-containing E3 ubiquitin-protein ligases. Proposed to act through recruitment and/or stabilization of the Ubl-conjugating enzyme (E2) at the E3:substrate complex. This Macaca fascicularis (Crab-eating macaque) protein is Melanoma-associated antigen E1 (MAGEE1).